The following is a 103-amino-acid chain: Large ribosomal subunit protein uL23 (103 aa).

This sequence belongs to the universal ribosomal protein uL23 family. As to quaternary structure, part of the 50S ribosomal subunit. Contacts protein L29, and trigger factor when it is bound to the ribosome.

Functionally, one of the early assembly proteins it binds 23S rRNA. One of the proteins that surrounds the polypeptide exit tunnel on the outside of the ribosome. Forms the main docking site for trigger factor binding to the ribosome. The polypeptide is Large ribosomal subunit protein uL23 (Chlorobium phaeobacteroides (strain DSM 266 / SMG 266 / 2430)).